The chain runs to 827 residues: Leucine--tRNA ligase (827 aa).

Residues 46–56 (PYPSGRIHMGH) carry the 'HIGH' region motif. Positions 585–589 (KMSKS) match the 'KMSKS' region motif. K588 is an ATP binding site.

Belongs to the class-I aminoacyl-tRNA synthetase family.

The protein resides in the cytoplasm. The catalysed reaction is tRNA(Leu) + L-leucine + ATP = L-leucyl-tRNA(Leu) + AMP + diphosphate. The sequence is that of Leucine--tRNA ligase from Desulfotalea psychrophila (strain LSv54 / DSM 12343).